Reading from the N-terminus, the 73-residue chain is Cell division protein ZapB (73 aa).

The stretch at 3–67 forms a coiled coil; the sequence is LELLSKLETK…WNDKVTGLVG (65 aa).

The protein belongs to the ZapB family. As to quaternary structure, homodimer. The ends of the coiled-coil dimer bind to each other, forming polymers. Interacts with FtsZ.

It localises to the cytoplasm. Non-essential, abundant cell division factor that is required for proper Z-ring formation. It is recruited early to the divisome by direct interaction with FtsZ, stimulating Z-ring assembly and thereby promoting cell division earlier in the cell cycle. Its recruitment to the Z-ring requires functional FtsA or ZipA. In Shewanella sp. (strain MR-4), this protein is Cell division protein ZapB.